The following is a 215-amino-acid chain: Peptide methionine sulfoxide reductase MsrA (215 aa).

Cys58 is an active-site residue.

This sequence belongs to the MsrA Met sulfoxide reductase family.

The enzyme catalyses L-methionyl-[protein] + [thioredoxin]-disulfide + H2O = L-methionyl-(S)-S-oxide-[protein] + [thioredoxin]-dithiol. It carries out the reaction [thioredoxin]-disulfide + L-methionine + H2O = L-methionine (S)-S-oxide + [thioredoxin]-dithiol. Functionally, has an important function as a repair enzyme for proteins that have been inactivated by oxidation. Catalyzes the reversible oxidation-reduction of methionine sulfoxide in proteins to methionine. The protein is Peptide methionine sulfoxide reductase MsrA of Pseudomonas aeruginosa (strain LESB58).